The primary structure comprises 290 residues: Bifunctional protein FolD (290 aa).

Residues 165 to 167 (GRG), Ser194, and Ile235 contribute to the NADP(+) site.

The protein belongs to the tetrahydrofolate dehydrogenase/cyclohydrolase family. As to quaternary structure, homodimer.

The enzyme catalyses (6R)-5,10-methylene-5,6,7,8-tetrahydrofolate + NADP(+) = (6R)-5,10-methenyltetrahydrofolate + NADPH. It catalyses the reaction (6R)-5,10-methenyltetrahydrofolate + H2O = (6R)-10-formyltetrahydrofolate + H(+). Its pathway is one-carbon metabolism; tetrahydrofolate interconversion. In terms of biological role, catalyzes the oxidation of 5,10-methylenetetrahydrofolate to 5,10-methenyltetrahydrofolate and then the hydrolysis of 5,10-methenyltetrahydrofolate to 10-formyltetrahydrofolate. This is Bifunctional protein FolD from Syntrophotalea carbinolica (strain DSM 2380 / NBRC 103641 / GraBd1) (Pelobacter carbinolicus).